We begin with the raw amino-acid sequence, 155 residues long: Small ribosomal subunit protein uS7c (155 aa).

Belongs to the universal ribosomal protein uS7 family. Part of the 30S ribosomal subunit.

Its subcellular location is the plastid. It is found in the chloroplast. Functionally, one of the primary rRNA binding proteins, it binds directly to 16S rRNA where it nucleates assembly of the head domain of the 30S subunit. This is Small ribosomal subunit protein uS7c (rps7) from Canella winterana (Wild cinnamon).